The sequence spans 472 residues: Argininosuccinate lyase (472 aa).

It belongs to the lyase 1 family. Argininosuccinate lyase subfamily.

Its subcellular location is the cytoplasm. It carries out the reaction 2-(N(omega)-L-arginino)succinate = fumarate + L-arginine. Its pathway is amino-acid biosynthesis; L-arginine biosynthesis; L-arginine from L-ornithine and carbamoyl phosphate: step 3/3. The sequence is that of Argininosuccinate lyase from Maricaulis maris (strain MCS10) (Caulobacter maris).